The sequence spans 65 residues: Large ribosomal subunit protein bL35 (65 aa).

This sequence belongs to the bacterial ribosomal protein bL35 family.

This chain is Large ribosomal subunit protein bL35, found in Sodalis glossinidius (strain morsitans).